The primary structure comprises 147 residues: 16 kDa phloem protein 2 (147 aa).

The 103-residue stretch at 1 to 103 (MPHGTLEVVL…FVEGSIPPTA (103 aa)) folds into the C2 domain. Residues Asp-20, Asp-26, Asp-73, Asp-75, and Asp-81 each contribute to the Ca(2+) site. Positions 126 to 147 (ENRSRGMDEESYGGWKNSEASY) are disordered.

The cofactor is Ca(2+).

In terms of biological role, binds to both sense and antisense RNA. Can also bind sheared DNA and dodecamer DNA with a low affinity. Interacts with mesophyll plasmodesmata to mediate its own cell-to-cell transport and potentiate RNA trafficking. May play a role in plant defense signaling. In Arabidopsis thaliana (Mouse-ear cress), this protein is 16 kDa phloem protein 2.